The sequence spans 219 residues: Ribose-5-phosphate isomerase A (219 aa).

Substrate is bound by residues 28-31 (SGST), 81-84 (DGAD), and 94-97 (KGGG). Residue Glu-103 is the Proton acceptor of the active site. Lys-121 lines the substrate pocket.

It belongs to the ribose 5-phosphate isomerase family. In terms of assembly, homodimer.

The enzyme catalyses aldehydo-D-ribose 5-phosphate = D-ribulose 5-phosphate. Its pathway is carbohydrate degradation; pentose phosphate pathway; D-ribose 5-phosphate from D-ribulose 5-phosphate (non-oxidative stage): step 1/1. Its function is as follows. Catalyzes the reversible conversion of ribose-5-phosphate to ribulose 5-phosphate. The protein is Ribose-5-phosphate isomerase A of Mannheimia succiniciproducens (strain KCTC 0769BP / MBEL55E).